Reading from the N-terminus, the 163-residue chain is Olfactory marker protein (163 aa).

At Ala2 the chain carries N-acetylalanine.

The protein belongs to the olfactory marker protein family. In terms of assembly, interacts with BEX1 and BEX2. In terms of tissue distribution, uniquely associated with mature olfactory receptor neurons.

The protein localises to the cytoplasm. Its function is as follows. May act as a modulator of the olfactory signal-transduction cascade. The sequence is that of Olfactory marker protein (Omp) from Mus musculus (Mouse).